Consider the following 173-residue polypeptide: Calcium-binding protein 5 (173 aa).

EF-hand domains follow at residues 28 to 63, 82 to 99, 105 to 140, and 142 to 173; these read DEIE…MGYM, GRVD…KLLA, IGVQ…LLGD, and LTSQ…MMSR. Residues Asp-41, Asp-43, Asp-45, and Asp-52 each contribute to the Ca(2+) site. Asp-118, Asn-120, Asp-122, Glu-124, Glu-129, Asp-155, Asn-157, Asp-159, Thr-161, and Glu-166 together coordinate Ca(2+).

In terms of assembly, interacts with CACNA1C (via C-terminal CDB motif) in a calcium-dependent manner. Interacts with STXBP1. Interacts with MYO6. Expressed in the retina (at protein level).

It localises to the cytoplasm. Its function is as follows. Inhibits calcium-dependent inactivation of L-type calcium channel and shifts voltage dependence of activation to more depolarized membrane potentials. Involved in the transmission of light signals. May positively regulate neurotransmitter vesicle endocytosis and exocytosis in a salt-dependent manner. May play a role in the extension and network organization of neurites. This chain is Calcium-binding protein 5 (CABP5), found in Bos taurus (Bovine).